A 589-amino-acid chain; its full sequence is PTS system mannitol-specific EIICB component (589 aa).

Residues 1–25 (MERKSSLKVRVQKLGTSLSNMVMPN) lie on the Cytoplasmic side of the membrane. In terms of domain architecture, PTS EIIC type-2 spans 14–347 (LGTSLSNMVM…ILKSDNSDDD (334 aa)). The helical transmembrane segment at 26 to 47 (IGAFIAWGVAASLFIATGYLPN) threads the bilayer. At 48–51 (KALD) the chain is on the extracellular side. A helical transmembrane segment spans residues 52–73 (TNVVGPMLKYVLPLLIGYTGGY). Residues 74–136 (NIHKQRGGVI…TGFEMLVNNF (63 aa)) lie on the Cytoplasmic side of the membrane. A helical transmembrane segment spans residues 137 to 158 (SLGLIGFALMVLAFFVIGPVVA). Topologically, residues 159–167 (QLTEWVGIG) are extracellular. A helical membrane pass occupies residues 168–188 (VEAIVKVHLLPLANLIIEPAK). Over 189-275 (ILFLNNALNH…VMMKPAMFLA (87 aa)) the chain is Cytoplasmic. A helical transmembrane segment spans residues 276 to 295 (VIAGGLTGTFTFQTLGAGLT). Over 296–317 (APASPGSIIAIMGMSPKGWGPH) the chain is Extracellular. A helical membrane pass occupies residues 318–339 (LVVLAGVFAAAVASFLVASIIL). At 340-589 (KSDNSDDDSL…YDKLVARMHK (250 aa)) the chain is on the cytoplasmic side. The region spanning 383–478 (HQIIFACDAG…SLTNGKASGS (96 aa)) is the PTS EIIB type-2 domain. The Phosphocysteine intermediate; for EIIB activity role is filled by cysteine 389. Cysteine 389 is modified (phosphocysteine; by EIIA).

Homodimer.

Its subcellular location is the cell membrane. It carries out the reaction D-mannitol(out) + N(pros)-phospho-L-histidyl-[protein] = D-mannitol 1-phosphate(in) + L-histidyl-[protein]. Functionally, the phosphoenolpyruvate-dependent sugar phosphotransferase system (sugar PTS), a major carbohydrate active transport system, catalyzes the phosphorylation of incoming sugar substrates concomitantly with their translocation across the cell membrane. The enzyme II CmtAB PTS system is involved in D-mannitol transport. The polypeptide is PTS system mannitol-specific EIICB component (Streptococcus mutans serotype c (strain ATCC 700610 / UA159)).